We begin with the raw amino-acid sequence, 176 residues long: Cytochrome b (176 aa).

The next 3 membrane-spanning stretches (helical) occupy residues 33 to 53 (FGSL…FLAM), 77 to 98 (WILR…YLHV), and 113 to 133 (WNIG…GYVL). Heme b is bound by residues H83 and H97.

Belongs to the cytochrome b family. As to quaternary structure, the cytochrome bc1 complex contains 11 subunits: 3 respiratory subunits (MT-CYB, CYC1 and UQCRFS1), 2 core proteins (UQCRC1 and UQCRC2) and 6 low-molecular weight proteins (UQCRH/QCR6, UQCRB/QCR7, UQCRQ/QCR8, UQCR10/QCR9, UQCR11/QCR10 and a cleavage product of UQCRFS1). This cytochrome bc1 complex then forms a dimer. Heme b serves as cofactor.

The protein resides in the mitochondrion inner membrane. Its function is as follows. Component of the ubiquinol-cytochrome c reductase complex (complex III or cytochrome b-c1 complex) that is part of the mitochondrial respiratory chain. The b-c1 complex mediates electron transfer from ubiquinol to cytochrome c. Contributes to the generation of a proton gradient across the mitochondrial membrane that is then used for ATP synthesis. The polypeptide is Cytochrome b (MT-CYB) (Myotis leibii (Eastern small-footed myotis)).